Consider the following 138-residue polypeptide: ATP synthase epsilon chain (138 aa).

Belongs to the ATPase epsilon chain family. In terms of assembly, F-type ATPases have 2 components, CF(1) - the catalytic core - and CF(0) - the membrane proton channel. CF(1) has five subunits: alpha(3), beta(3), gamma(1), delta(1), epsilon(1). CF(0) has three main subunits: a, b and c.

Its subcellular location is the cell inner membrane. Produces ATP from ADP in the presence of a proton gradient across the membrane. This chain is ATP synthase epsilon chain, found in Geobacter metallireducens (strain ATCC 53774 / DSM 7210 / GS-15).